The primary structure comprises 51 residues: Large ribosomal subunit protein eL39 (51 aa).

It belongs to the eukaryotic ribosomal protein eL39 family.

The polypeptide is Large ribosomal subunit protein eL39 (rpl39e) (Thermoplasma acidophilum (strain ATCC 25905 / DSM 1728 / JCM 9062 / NBRC 15155 / AMRC-C165)).